The sequence spans 901 residues: HTH-type transcriptional regulator MalT (901 aa).

ATP is bound at residue 39–46; the sequence is SPAGYGKT. The 66-residue stretch at 829–894 folds into the HTH luxR-type domain; the sequence is ELIRTSPLTQ…AAVQHAQKLL (66 aa). The segment at residues 853–872 is a DNA-binding region (H-T-H motif); sequence NEQIAGELEVAATTIKTHIR.

Belongs to the MalT family. As to quaternary structure, monomer in solution. Oligomerizes to an active state in the presence of the positive effectors ATP and maltotriose.

Its activity is regulated as follows. Activated by ATP and maltotriose, which are both required for DNA binding. Its function is as follows. Positively regulates the transcription of the maltose regulon whose gene products are responsible for uptake and catabolism of malto-oligosaccharides. Specifically binds to the promoter region of its target genes, recognizing a short DNA motif called the MalT box. This chain is HTH-type transcriptional regulator MalT, found in Escherichia coli O139:H28 (strain E24377A / ETEC).